Reading from the N-terminus, the 1309-residue chain is Lysine-specific demethylase 2B (1309 aa).

S26 is subject to Phosphoserine. The region spanning 147–315 is the JmjC domain; it reads FSHTKLEHLV…MQLRIYEIED (169 aa). Residue T208 coordinates substrate. Residues H211 and D213 each contribute to the Fe cation site. K228 is a substrate binding site. Residue H283 participates in Fe cation binding. Residues 378–403 show a composition bias toward acidic residues; that stretch reads DMEEESCEQQPQEEEEEEEDKEEEGD. Positions 378-476 are disordered; it reads DMEEESCEQQ…PTGSPATEVS (99 aa). The span at 404–413 shows a compositional bias: basic and acidic residues; the sequence is GADKTPKPPT. Positions 415–424 are enriched in low complexity; it reads DPTSPTSTPP. Phosphoserine occurs at positions 447 and 450. T466 carries the post-translational modification Phosphothreonine. The span at 467-476 shows a compositional bias: polar residues; it reads PTGSPATEVS. S470 carries the post-translational modification Phosphoserine. The segment at 579–625 adopts a CXXC-type zinc-finger fold; the sequence is ARRRRTRCRKCEACLRTECGECHFCKDMKKFGGPGRMKQSCIMRQCI. Zn(2+) contacts are provided by C586, C589, C592, C597, C600, C603, C619, C624, C635, C638, C661, C664, H669, C672, C692, and C695. The PHD-type zinc-finger motif lies at 632–698; sequence TAVCLVCGEA…CWECPKCNHA (67 aa). Disordered regions lie at residues 700-816 and 828-1005; these read KTGK…SLSP and QLKP…SASP. Over residues 722–772 the composition is skewed to basic and acidic residues; sequence KEQKMNRDNKEGQEPAKRRSECEEAPRRRSDEHPKKVPADGILRRKSDDVH. Residues 792–816 show a composition bias toward low complexity; the sequence is SSLQTSPGSSSHLSPRPPLGSSLSP. Residues K830 and K863 each participate in a glycyl lysine isopeptide (Lys-Gly) (interchain with G-Cter in SUMO2) cross-link. A compositionally biased stretch (polar residues) spans 883 to 892; it reads SRSSSPTAGP. Residues 905-914 show a composition bias toward basic residues; the sequence is KVKMRRKRRL. Residues 915-933 are compositionally biased toward basic and acidic residues; it reads VNKELSKELSKELNHEIQK. A coiled-coil region spans residues 916–944; the sequence is NKELSKELSKELNHEIQKTESTLAHESQQ. S924 is modified (phosphoserine). Over residues 934–946 the composition is skewed to polar residues; sequence TESTLAHESQQPI. A phosphoserine mark is found at S948 and S952. Positions 955-968 are enriched in basic and acidic residues; sequence DEPKRPLSHCERPH. A phosphoserine mark is found at S991 and S1004. The F-box domain occupies 1032–1078; the sequence is DGAAHVMHREVWMAVFSYLSHRDLCVCMRVCRTWNRWCCDKRLWTRI. LRR repeat units follow at residues 1106-1127, 1129-1155, 1195-1220, 1221-1250, 1251-1275, and 1276-1309; these read WTNI…LRDL, LSGC…DVQW, GLDI…QLSY, CNHI…NLSD, CNKV…DLRY, and CKQV…QKLS.

Belongs to the JHDM1 histone demethylase family. In terms of assembly, interacts with SKP1, forming heterodimers. The KDM2B-SKP1 heterodimeric complex interacts with the PCGF1-BCORL heterodimeric complex to form a homotetrameric polycomb repression complex 1 (PRC1.1). Directly interacts with CUL1. The SKP1-KDM2B interacts with UBB. Requires Fe(2+) as cofactor.

It is found in the nucleus. It localises to the nucleolus. The protein resides in the chromosome. The enzyme catalyses N(6),N(6)-dimethyl-L-lysyl(36)-[histone H3] + 2 2-oxoglutarate + 2 O2 = L-lysyl(36)-[histone H3] + 2 formaldehyde + 2 succinate + 2 CO2. Histone demethylase activity is inhibited by fumarate. Its function is as follows. Histone demethylase that demethylates 'Lys-4' and 'Lys-36' of histone H3, thereby playing a central role in histone code. Preferentially demethylates trimethylated H3 'Lys-4' and dimethylated H3 'Lys-36' residue while it has weak or no activity for mono- and tri-methylated H3 'Lys-36'. Preferentially binds the transcribed region of ribosomal RNA and represses the transcription of ribosomal RNA genes which inhibits cell growth and proliferation. May also serve as a substrate-recognition component of the SCF (SKP1-CUL1-F-box protein)-type E3 ubiquitin ligase complex. This is Lysine-specific demethylase 2B (Kdm2b) from Mus musculus (Mouse).